We begin with the raw amino-acid sequence, 211 residues long: Thiamine-phosphate synthase (211 aa).

4-amino-2-methyl-5-(diphosphooxymethyl)pyrimidine is bound by residues 37–41 and N69; that span reads QLRIK. Residues D70 and D89 each contribute to the Mg(2+) site. S108 provides a ligand contact to 4-amino-2-methyl-5-(diphosphooxymethyl)pyrimidine. 134 to 136 contributes to the 2-[(2R,5Z)-2-carboxy-4-methylthiazol-5(2H)-ylidene]ethyl phosphate binding site; that stretch reads TQT. K137 contributes to the 4-amino-2-methyl-5-(diphosphooxymethyl)pyrimidine binding site. Residues G166 and 186-187 each bind 2-[(2R,5Z)-2-carboxy-4-methylthiazol-5(2H)-ylidene]ethyl phosphate; that span reads VS.

It belongs to the thiamine-phosphate synthase family. Requires Mg(2+) as cofactor.

The catalysed reaction is 2-[(2R,5Z)-2-carboxy-4-methylthiazol-5(2H)-ylidene]ethyl phosphate + 4-amino-2-methyl-5-(diphosphooxymethyl)pyrimidine + 2 H(+) = thiamine phosphate + CO2 + diphosphate. It carries out the reaction 2-(2-carboxy-4-methylthiazol-5-yl)ethyl phosphate + 4-amino-2-methyl-5-(diphosphooxymethyl)pyrimidine + 2 H(+) = thiamine phosphate + CO2 + diphosphate. The enzyme catalyses 4-methyl-5-(2-phosphooxyethyl)-thiazole + 4-amino-2-methyl-5-(diphosphooxymethyl)pyrimidine + H(+) = thiamine phosphate + diphosphate. The protein operates within cofactor biosynthesis; thiamine diphosphate biosynthesis; thiamine phosphate from 4-amino-2-methyl-5-diphosphomethylpyrimidine and 4-methyl-5-(2-phosphoethyl)-thiazole: step 1/1. Functionally, condenses 4-methyl-5-(beta-hydroxyethyl)thiazole monophosphate (THZ-P) and 2-methyl-4-amino-5-hydroxymethyl pyrimidine pyrophosphate (HMP-PP) to form thiamine monophosphate (TMP). The protein is Thiamine-phosphate synthase of Klebsiella pneumoniae subsp. pneumoniae (strain ATCC 700721 / MGH 78578).